The chain runs to 331 residues: Geranylgeranyl transferase type-2 subunit beta (331 aa).

An N-acetylglycine modification is found at G2. T3 carries the phosphothreonine modification. PFTB repeat units lie at residues 20-61 (LEKH…DLMG), 68-109 (REEI…TLYD), 116-157 (INKV…ALLG), 164-205 (VEKA…AITS), 212-253 (SDLL…KIIG), and 260-302 (REKL…SLLG). Position 190–192 (190–192 (HAG)) interacts with geranylgeranyl diphosphate. D238 and C240 together coordinate Zn(2+). 241 to 244 (YSWW) serves as a coordination point for geranylgeranyl diphosphate. H290 serves as a coordination point for Zn(2+).

Belongs to the protein prenyltransferase subunit beta family. As to quaternary structure, heterotrimer composed of RABGGTA, RABGGTB and CHM; within this trimer, RABGGTA and RABGGTB form the catalytic component B, while CHM (component A) mediates peptide substrate binding. The Rab GGTase dimer (RGGT) interacts with CHM (component A) prior to Rab protein binding; the association is stabilized by geranylgeranyl pyrophosphate (GGpp). The CHM:RGGT:Rab complex is destabilized by GGpp. Interaction of RABGGTB with prenylated PTP4A2 precludes its association with RABGGTA and inhibits enzyme activity. Interacts with CHODL. Interacts with non-phosphorylated form of RAB8A; phosphorylation of RAB8A at 'Thr-72' disrupts this interaction. The cofactor is Zn(2+).

The enzyme catalyses geranylgeranyl diphosphate + L-cysteinyl-[protein] = S-geranylgeranyl-L-cysteinyl-[protein] + diphosphate. Its activity is regulated as follows. The enzymatic reaction requires the aid of a Rab escort protein (also called component A). Catalyzes the transfer of a geranylgeranyl moiety from geranylgeranyl diphosphate to both cysteines of Rab proteins with the C-terminal sequence -XXCC, -XCXC and -CCXX, such as RAB1A, RAB3A, RAB5A and RAB7A. The polypeptide is Geranylgeranyl transferase type-2 subunit beta (RABGGTB) (Bos taurus (Bovine)).